Here is a 176-residue protein sequence, read N- to C-terminus: tRNA (cytidine(56)-2'-O)-methyltransferase (176 aa).

S-adenosyl-L-methionine-binding positions include leucine 86 and 111 to 115 (GAEKV).

The protein belongs to the aTrm56 family. In terms of assembly, homodimer.

It localises to the cytoplasm. It catalyses the reaction cytidine(56) in tRNA + S-adenosyl-L-methionine = 2'-O-methylcytidine(56) in tRNA + S-adenosyl-L-homocysteine + H(+). Its function is as follows. Specifically catalyzes the AdoMet-dependent 2'-O-ribose methylation of cytidine at position 56 in tRNAs. In Methanoregula boonei (strain DSM 21154 / JCM 14090 / 6A8), this protein is tRNA (cytidine(56)-2'-O)-methyltransferase.